Reading from the N-terminus, the 284-residue chain is Cell division protein FtsQ (284 aa).

The span at 1 to 10 (MAFGKSKNRR) shows a compositional bias: basic residues. The interval 1–23 (MAFGKSKNRRRQDAAQQKEAVRG) is disordered. At 1–34 (MAFGKSKNRRRQDAAQQKEAVRGAVRSQGPRALK) the chain is on the cytoplasmic side. Residues 35–52 (VLGLTLGTGLLVWGGAAL) traverse the membrane as a helical segment. Over 53 to 284 (REWTLTSPRF…ASERSGASMR (232 aa)) the chain is Periplasmic. Positions 62–130 (FELEAVSFSG…NRVSVEVTEH (69 aa)) constitute a POTRA domain.

The protein belongs to the FtsQ/DivIB family. FtsQ subfamily.

The protein localises to the cell inner membrane. Essential cell division protein. In Myxococcus fulvus (strain ATCC BAA-855 / HW-1), this protein is Cell division protein FtsQ.